The following is a 143-amino-acid chain: Small ribosomal subunit protein uS11c (143 aa).

This sequence belongs to the universal ribosomal protein uS11 family. In terms of assembly, part of the 30S ribosomal subunit.

It is found in the plastid. The protein localises to the chloroplast. This Oryza nivara (Indian wild rice) protein is Small ribosomal subunit protein uS11c.